A 332-amino-acid chain; its full sequence is GVSYFSPRFGFTCNMVENFEVVLANGDIVNANATSHRKLWKALRGGSNNFGIVTAITLRVFSQGKFWGGQTFHPISTRKDHFHALENLIAAVPYDKYAHFINTIVITNASYGNWFIGNSLQYTKSDPPTPFPETFKPFTDIPRVALFPGAPDNTLRVDNHTAFTLEYAALNVYPKRWQFATISFGNSAEMMEDFFQMANETIQPFLTLPGFLLSVAYQPLPTLMSERYGEVDSLGPIQTQGNMFYIHWAMSVDGSEVETDRKFEKVTRDLFQRAEAKAREKGLRRDFLQLTSNGTLKELWRVSKEYDPTGMFQKQVPGGFKLSEMDEDSMEL.

Belongs to the oxygen-dependent FAD-linked oxidoreductase family.

The protein operates within secondary metabolite biosynthesis. In terms of biological role, FAD-dependent monooxygenase; part of the gene cluster that mediates the biosynthesis of elsinochrome C, a perelyenequinone phytotoxin structurally similar to cercosporin. The first step of elsinochrome C biosynthesis is performed by the polyketide synthase elcA which catalyzes the formation of nor-toralactone. The starter unit acyltransferase (SAT) domain of elcA initiates polyketide extension by the selective utilization of acetyl-CoA, which is elongated to the heptaketide in the beta-ketoacyl synthase (KS) domain by successive condensations with six malonyl units introduced by the malonyl acyltransferase (MAT) domain. The product template (PT) domain catalyzes C4-C9 and C2-C11 aldol cyclizations and dehydrations to a trihydroxynaphthalene, which is thought to be delivered to the thioesterase (TE) domain for product release. The bifunctional enzyme elcB then methylates nor-toralactone to toralactone before conducting an unusual oxidative aromatic ring opening. The next step in perylenequinone biosynthesis is an O-methylation at the nascent OH-6 of the elcB product performed by the O-methyltransferase elcD. The oxidative coupling of the two monomeric naphthol units in perylenequinone biosynthesis is catalyzed by the FAD-dependent monooxygenase elcE and the multicopper oxidase elcG. ElcG might catalyze the first intermolecular coupling in a regio- and stereo-selective manner via a phenol radical coupling mechanism and the elcE could forge the second C-C bond intramolecularly via a hydride transfer mechanism. The fasciclin domain-containing protein elcF might also play a role duting this step. The last piece of the puzzle in the biosynthesis of elsinochrome C is the additional annulation by enolate coupling to afford the dihydrobenzo(ghi)perylenequinone system, catalyzed by the FAD-dependent monooxygenase elcH. The protein is FAD-dependent monooxygenase elcE of Phaeosphaeria nodorum (strain SN15 / ATCC MYA-4574 / FGSC 10173) (Glume blotch fungus).